Reading from the N-terminus, the 2626-residue chain is MNVSDGGRRRFEDNEHTLRIYPGTISEGTIYCPIPARKNSTAAEVIDSLINRLHLDKTKCYVLAEVKEFGGEEWILNPTDCPVQRMMLWPRMALENRLSGEDYRFLLREKNLDGSIHYGSLQSWLRVTEERRRMMERGFLPQPQQKDFDDLCSLPDLNEKTLLENLRNRFKHEKIYTYVGSILIAINPFKFLPIYNPKYVKMYDNHQLGKLEPHIYAVADVAYHAMLQRKKNQCIVISGESGSGKTQSTNFLIHHLTALSQKGFASGVEQIILGAGPVLEAFGNAKTAHNNNSSRFGKFIQVNYQETGTVLGAYVEKYLLEKSRLVYQEHNERNYHVFYYLLAGASEEERLAFHLKQPEEYHFLNQITKKPLRQSWDDYCYDSEPDCFTVEGEDLRHDFERLQLAMEMVGFLPKTRRQIFSLLSAILHLGNISYKKKTYRDDSIDICNPEVLPIVSELLEVKEEMLFEALVTRKTVTVGEKLILPYKLAEAVTVRNSMAKSLYSALFDWIVFRINHALLNSKDLEKDTKTLSIGVLDIFGFEDYENNSFEQFCINFANERLQHYFNQHIFKLEQEEYRTEGISWHNIDYIDNTCCINLISKKPTGLLHLLDEESNFPQATNQTLLDKFKHQHEENSYIEFPAVMEPAFIIKHYAGKVKYGVKDFREKNTDHMRPDIVALLRSSRNAFVSGMTGIDPVAVFRWAVLRAFFRAVVAFREAGKRHIQRKSGHDDTTPCTILKSMDSFSFLQHPVHQRSLEILQRCKEEKYSITRKNPRTPLSDLQGMNTLNEKNQHDTFDIAWNVRTGIRQSRLPTNNTSLLDKDGIFANSASSKLLERAHGILTRNKNFRSKPVLPKHLLEVNSLKHLTRLTLQDRITKSLLHLHKKKKPPSISAQFQVSLSKLMETLDQAEPYFVKCIRSNAEKLPLRFSDALVLRQLRYTGMLETVRIRQSGYSSKYSFQDFVSHFHVLLPQHIIPSKFNIQDFFRKININPDNYQVGKTMVFLKEHERQHLQDLLHQEVLRRIILLQRWFRVLLSRQQFLHLRQASVIIQRFWRNYLNQKQVRNAAVEKDAFIMASAASLLQASWRAHLERQRYLELRAAAVIIQQRWRELCRRRHRAATCIQSRWRGYRQSKKYKEQRNKIILLQSIYRGFRARQRYKALKEERLKETKLEHGLAQIKTCGPLEIQGSDPSEWEDRSFANRVKAIEECKSVIESNRISRESSMDFSKESPDKQQERGRSQSGTDLQGDVIVRQRPKSLEDLHQKKVGRAKRESRRMRELEQAIFSLELLKVRSLGGMSPSEERRWSTELMPEGLQSPQGTPDSESSQGSLELLTCDENQKSKPESLILDDGELKISSPSTFTNPKFDSQNNALSASSETSSTFSGKGASSDSEHLKNGTAEEKLVYSSQPITCKSQLRDSFVSSSLPTFFYIPHQEPLKTSSQLDTSIQRNKLPERETTLKTTLTLDINREARKCQFSGQVTPLNPDSSCTVLKKLEKLNIEKEKRQKQLQQQNEKEMMEQIRQQTDILEKERKAFKTIEQSRTEASLLAPSFYQSRQKVERPSSLHIQNTPSKGEAGVLGSPSALATKDSPSIHLPPKDRPVTLFFERKGSPCQSRTVKELTKTERMGTQHDAACRLSNNHNTEREHFKSTHSYSHRSDDPSREGSSRPIFFTPKDNVITPLVHSGNPQVHKQDEPAWKSKLAGPGQREVARPAHKKKARMARTRSDFLTRGTFADGEGDTEEDDYDDIIEPLLSLDQASHSELGPVSSLGQASHSDSEMTSQRFSSVDEQARLHKAMSQGEITKLAGRQKSSDLDIRPQRAKMRFWAKGKQGEKKTTRVKPAPQSEVSSLFAGSDVTPVHPFSDELTQYHPTPPLSPELPGSCRKEFKENKEPSPKAKRKRGVKISSVALDSMHWQNDSVQIIASANDLKSMDEFLLKKMNDLDNEDSKKDTLVDVVFKKALKEFRQNIFSSYSSALAMDDGKSIRYKDLYALFEQILEKTMRFEQRDWNESPVRVWVNTFKVFLDEYMNEFKTLDSTAPKVLKTERKKRRKKETDLVEEHNGHMFKATQYSIPTYCEYCSSLIWIMDRASVCKLCKYACHKKCCLKTTAKCSKKYDPELSSRQFGVELSRLTSEDRAVPLVVEKLINYIEMHGLYTEGIYRKSGSTNKIKELRQGLDTDAESVNLDDYNIHVIASVFKQWLRDLPNPLMTFELYEEFLRAMGLQERKETIRGVYSVIDQLSRTHLSTLERLIFHLVRIALQEDTNRMSANALAIVFAPCILRCPDTTDPLQSVQDISKTTTCVELIVVEQMNKYKARLKDISSLEFAENKAKTRLSLIRRSMKPVLIAVRFMSITRSSVSGKGRLHRGSHPNPSSPVIVRLPSMSDVPEETLTSETAMDTDVTDQQQAAMQQEEKVLTEQIENLQKEKEELTFEMLVLEPRASDDEALESEASIGTADSSENLNMDPEERSLALSSLKAAGKSEPSSKFRKQLRKQPDSLDSVSSSVSSCLSNTTSSHGTRKRFQIYSKSPFYRAASACEAQGMEGPLGQAKSLEDRPQFISRGTFNPEKGKQKLKNVKNSPQKTKETPEGTVSSGRKKTVDSDCSSTQQLPLFGNNEFMV.

The Ras-associating domain occupies 14–112; the sequence is NEHTLRIYPG…YRFLLREKNL (99 aa). Residues 146-1017 form the Myosin motor domain; the sequence is KDFDDLCSLP…ERQHLQDLLH (872 aa). A helical membrane pass occupies residues 175–195; the sequence is IYTYVGSILIAINPFKFLPIY. 239–246 serves as a coordination point for ATP; sequence GESGSGKT. Serine 755 bears the Phosphoserine mark. The tract at residues 908 to 919 is actin-binding; that stretch reads QAEPYFVKCIRS. IQ domains lie at 1021–1041, 1043–1072, 1075–1104, 1116–1145, and 1139–1168; these read LRRI…QQFL, LRQA…EKDA, MASA…AAVI, RHRA…KIIL, and QRNK…ERLK. The neck or regulatory domain stretch occupies residues 1022 to 1163; the sequence is RRIILLQRWF…RARQRYKALK (142 aa). The tail stretch occupies residues 1164–2589; sequence EERLKETKLE…LKNVKNSPQK (1426 aa). Positions 1221–1240 are enriched in basic and acidic residues; that stretch reads RESSMDFSKESPDKQQERGR. Positions 1221–1276 are disordered; that stretch reads RESSMDFSKESPDKQQERGRSQSGTDLQGDVIVRQRPKSLEDLHQKKVGRAKRESR. Serine 1243 bears the Phosphoserine mark. Threonine 1245 carries the post-translational modification Phosphothreonine. Serine 1259 is subject to Phosphoserine. The stretch at 1265–1292 forms a coiled coil; the sequence is QKKVGRAKRESRRMRELEQAIFSLELLK. Residues 1266 to 1276 are compositionally biased toward basic residues; sequence KKVGRAKRESR. A phosphoserine mark is found at serine 1300 and serine 1318. Residues 1360 to 1375 show a composition bias toward polar residues; it reads PSTFTNPKFDSQNNAL. The interval 1360–1397 is disordered; it reads PSTFTNPKFDSQNNALSASSETSSTFSGKGASSDSEHL. Residues 1376 to 1386 show a composition bias toward low complexity; sequence SASSETSSTFS. The stretch at 1493-1540 forms a coiled coil; the sequence is TVLKKLEKLNIEKEKRQKQLQQQNEKEMMEQIRQQTDILEKERKAFKT. Disordered regions lie at residues 1562 to 1602, 1618 to 1673, 1689 to 1726, 1765 to 1784, and 1872 to 1907; these read VERP…PPKD, SRTV…SRPI, GNPQ…RMAR, SELG…SEMT, and QYHP…KRGV. 2 stretches are compositionally biased toward basic and acidic residues: residues 1620–1632 and 1659–1669; these read TVKE…RMGT and HRSDDPSREGS. A compositionally biased stretch (basic residues) spans 1716-1726; the sequence is PAHKKKARMAR. Polar residues predominate over residues 1772–1784; that stretch reads SLGQASHSDSEMT. A compositionally biased stretch (basic and acidic residues) spans 1887 to 1899; the sequence is CRKEFKENKEPSP. Serine 2016 is modified (phosphoserine). A Phorbol-ester/DAG-type zinc finger spans residues 2067–2116; the sequence is GHMFKATQYSIPTYCEYCSSLIWIMDRASVCKLCKYACHKKCCLKTTAKC. In terms of domain architecture, Rho-GAP spans 2131–2319; that stretch reads VELSRLTSED…LIVVEQMNKY (189 aa). Residues 2365–2385 form a disordered region; that stretch reads SGKGRLHRGSHPNPSSPVIVR. Serine 2380 is modified (phosphoserine). The stretch at 2408–2444 forms a coiled coil; that stretch reads TDQQQAAMQQEEKVLTEQIENLQKEKEELTFEMLVLE. The segment at 2449–2527 is disordered; that stretch reads DDEALESEAS…NTTSSHGTRK (79 aa). The span at 2504 to 2522 shows a compositional bias: low complexity; it reads SLDSVSSSVSSCLSNTTSS. Position 2542 is a phosphoserine (serine 2542). The segment at 2552–2614 is disordered; that stretch reads PLGQAKSLED…TVDSDCSSTQ (63 aa).

The protein belongs to the TRAFAC class myosin-kinesin ATPase superfamily. Myosin family. In terms of processing, phosphorylated by ALPK1 following monosodium urate monohydrate (MSU)-induced inflammation. Expressed at high levels in brain, followed by testis and spleen. Expressed at very low levels, in kidney. Detected abundantly in brain and testis and at lower levels in adrenal gland, kidney, lung and spleen (at protein level). In adrenal gland it is mostly found in the medulla but not in the cortex. In brain, it is found in the cerebellum and the CA2-CA3 regions of the hippocampus.

It localises to the membrane. It is found in the cytoplasm. Its subcellular location is the synapse. The protein localises to the cell projection. The protein resides in the growth cone. Myosins are actin-based motor molecules with ATPase activity. Unconventional myosins serve in intracellular movements. Regulates Rho by stimulating it's GTPase activity in neurons. Required for the regulation of neurite branching and motor neuron axon guidance. The chain is Unconventional myosin-IXa (Myo9a) from Rattus norvegicus (Rat).